We begin with the raw amino-acid sequence, 297 residues long: Signal-transducing adaptor protein 1 (297 aa).

The PH domain occupies 25-121 (PLYFEGFLLV…WRGFILTVTE (97 aa)). Tyr170 bears the Phosphotyrosine mark. The region spanning 179-273 (ECFYAVSRKE…GNLRPFIHSA (95 aa)) is the SH2 domain. The segment at 271–297 (HSADDNFGQDPNIEDRSEKFKKNPHNA) is disordered.

As to quaternary structure, interacts with URI1; the interaction is phosphorylation-dependent occurs in a growth-dependent manner. Interacts with KIT and CSF1R. Phosphorylated on tyrosine by TEC. Phosphorylated on tyrosine by KIT. In terms of tissue distribution, expression restricted to the bone marrow.

The protein localises to the nucleus. The protein resides in the cytoplasm. It localises to the mitochondrion. Its function is as follows. May function as an adapter molecule downstream of KIT in the proliferation or differentiation of hematopoietic stem cells. This is Signal-transducing adaptor protein 1 (Stap1) from Mus musculus (Mouse).